The primary structure comprises 124 residues: Single-stranded DNA-binding protein (124 aa).

Belongs to the phi29likevirus single-strand-binding protein family. In terms of assembly, monomer.

Its function is as follows. Single-stranded DNA binding protein required for the elongation during viral DNA replication by strand displacement. Displaced viral DNA strands are transiently coated with the ssDNA-binding protein and therefore protected againt nucleases. The latter is then probably removed by the replisome that performs lagging strand synthesis or during the events that lead up to the recombination process. Has helix-destabilizing activity since it removes secondary structure from the ssDNA in replicative intermediates. The protein is Single-stranded DNA-binding protein (5) of Bacillus subtilis (Bacteriophage PZA).